The following is a 273-amino-acid chain: 3-methyl-2-oxobutanoate hydroxymethyltransferase 1 (273 aa).

The Mg(2+) site is built by Asp-49 and Asp-88. 3-methyl-2-oxobutanoate contacts are provided by residues 49 to 50, Asp-88, and Lys-118; that span reads DS. Glu-120 provides a ligand contact to Mg(2+). The active-site Proton acceptor is the Glu-187.

It belongs to the PanB family. In terms of assembly, homodecamer; pentamer of dimers. Requires Mg(2+) as cofactor.

Its subcellular location is the cytoplasm. The catalysed reaction is 3-methyl-2-oxobutanoate + (6R)-5,10-methylene-5,6,7,8-tetrahydrofolate + H2O = 2-dehydropantoate + (6S)-5,6,7,8-tetrahydrofolate. It participates in cofactor biosynthesis; (R)-pantothenate biosynthesis; (R)-pantoate from 3-methyl-2-oxobutanoate: step 1/2. Functionally, catalyzes the reversible reaction in which hydroxymethyl group from 5,10-methylenetetrahydrofolate is transferred onto alpha-ketoisovalerate to form ketopantoate. The protein is 3-methyl-2-oxobutanoate hydroxymethyltransferase 1 of Pseudomonas aeruginosa (strain UCBPP-PA14).